A 355-amino-acid polypeptide reads, in one-letter code: Guanine nucleotide-binding protein subunit beta-5a (355 aa).

The disordered stretch occupies residues 1–23; that stretch reads MAAQEEPAQPGDSLATLKSESDT. WD repeat units lie at residues 63-102, 105-144, 153-194, 195-238, 239-278, 280-322, and 325-355; these read GHGNKVLCMDWCKDKRRIVSSSQDGKVIVWDAFTTNKEHA, MPCTWVMACAYAPSGCAVACGGLDNKCSVYPLSLDKNENL, MHTN…QSFH, GHAA…QSFE, SHDSDINSVRYYPSGDAFASGSDDATCRLYDLRADREVAI, SKES…RVSI, and GHENRVSTLRVSPDGTAFCSGSWDHTLRIWA.

Belongs to the WD repeat G protein beta family. In terms of assembly, may interact with RGS9; this interaction stabilizes both proteins and increases RGS9 GTPase-activating protein (GAP) activity, hence accelerating the deactivation of D(2) dopamine receptor-mediated signaling.

It is found in the membrane. In terms of biological role, enhances GTPase-activating protein (GAP) activity of regulator of G protein signaling (RGS) proteins, such as RGS7 and RGS9, hence involved in the termination of the signaling initiated by the G protein coupled receptors (GPCRs) by accelerating the GTP hydrolysis on the G-alpha subunits, thereby promoting their inactivation. Increases RGS7 GTPase-activating protein (GAP) activity, thereby regulating mood and cognition. Increases RGS9 GTPase-activating protein (GAP) activity, hence contributes to the deactivation of G protein signaling initiated by D(2) dopamine receptors. Along with gnb5b, plays an important role in neuronal signaling, including in the parasympathetic, but not sympathetic, control of heart rate. The chain is Guanine nucleotide-binding protein subunit beta-5a from Danio rerio (Zebrafish).